Here is a 158-residue protein sequence, read N- to C-terminus: Secreted frizzled-related protein 1 (158 aa).

Positions 1 to 34 (VRDSCEPVMQFFGFYWPEMLKCDKFPEGDVCIAM) constitute an FZ domain. N-linked (GlcNAc...) asparagine glycosylation occurs at asparagine 38. Disulfide bonds link cysteine 51–cysteine 121 and cysteine 68–cysteine 123. The 108-residue stretch at 51–158 (CPPCDNELKS…IHKWDKKNKE (108 aa)) folds into the NTR domain.

The protein belongs to the secreted frizzled-related protein (sFRP) family. As to quaternary structure, interacts with WNT4, WNT1, WNT2, WNT8, MYOC and FRZD6.

The protein localises to the secreted. In terms of biological role, soluble frizzled-related proteins (sFRPS) function as modulators of Wnt signaling through direct interaction with Wnts. They have a role in regulating cell growth and differentiation in specific cell types. SFRP1 decreases intracellular beta-catenin levels. Has antiproliferative effects on vascular cells, in vitro and in vivo, and can induce, in vivo, an angiogenic response. In vascular cell cycle, delays the G1 phase and entry into the S phase. In kidney development, inhibits tubule formation and bud growth in metanephroi. Inhibits WNT1/WNT4-mediated TCF-dependent transcription. The polypeptide is Secreted frizzled-related protein 1 (Sfrp1) (Rattus norvegicus (Rat)).